A 336-amino-acid polypeptide reads, in one-letter code: Antigen-presenting glycoprotein CD1d1 (336 aa).

The signal sequence occupies residues 1–21 (MRYLPWLLLWAFLQVWGQSEA). Residues 22–305 (QQKNYTFRCL…YWDARQAPVG (284 aa)) are Extracellular-facing. Residues N25, N38, and N60 are each glycosylated (N-linked (GlcNAc...) asparagine). D98 contacts a D-galactosylceramide. Cystine bridges form between C122-C186 and C226-C281. N128 carries an N-linked (GlcNAc...) asparagine glycan. 171-174 (DQGT) serves as a coordination point for a D-galactosylceramide. The N-linked (GlcNAc...) asparagine glycan is linked to N183. An Ig-like domain is found at 207-297 (PVAWLSSVPS…LGGQDIILYW (91 aa)). Residues 306–326 (LIVFIVLIMLVVVGAVVYYIW) form a helical membrane-spanning segment. Residues 327–336 (RRRSAYQDIR) lie on the Cytoplasmic side of the membrane. The short motif at 332 to 335 (YQDI) is the Internalization signal element.

As to quaternary structure, heterodimer with B2M (beta-2-microglobulin). Interacts with MHC II and CD74. N-glycosylated. As to expression, expressed on cortical thymocytes, on certain T-cell leukemias, and in various other tissues.

The protein resides in the cell membrane. It localises to the endosome membrane. The protein localises to the lysosome membrane. In terms of biological role, antigen-presenting protein that binds self and non-self glycolipids and presents them to T-cell receptors on natural killer T-cells. The sequence is that of Antigen-presenting glycoprotein CD1d1 (Cd1d1) from Mus musculus (Mouse).